We begin with the raw amino-acid sequence, 509 residues long: Citrate synthase 3, peroxisomal (509 aa).

Active-site residues include histidine 319, histidine 358, and aspartate 414. Residues 485–509 (SKESDKLGQVATSNASRRRLAGSSV) form a disordered region. Basic residues predominate over residues 500 to 509 (SRRRLAGSSV).

Belongs to the citrate synthase family. In terms of tissue distribution, widely expressed. Expressed throughout the shoot. Expressed in flower, silique, stem, cauline leaf, young leaf, mature leaf and senescent leaf.

It localises to the peroxisome. It catalyses the reaction oxaloacetate + acetyl-CoA + H2O = citrate + CoA + H(+). The protein operates within carbohydrate metabolism; tricarboxylic acid cycle; isocitrate from oxaloacetate: step 1/2. Functionally, peroxisomal citrate synthase required for the fatty acid respiration in seedlings, citrate being exported from peroxisomes into mitochondria during respiration of triacylglycerol (TAG). Indeed, complete respiration requires the transfer of carbon in the form of citrate from the peroxisome to the mitochondria. This is Citrate synthase 3, peroxisomal (CSY3) from Arabidopsis thaliana (Mouse-ear cress).